The primary structure comprises 860 residues: Tetratricopeptide repeat protein 13 (860 aa).

7 TPR repeats span residues 143–176, 216–248, 249–282, 284–316, 317–350, 352–384, and 386–418; these read TNEE…EPDL, PEVF…LQPS, ARLY…NKNQ, IAML…KVDF, IDAY…NQNH, QTLQ…EPYN, and VCQY…DPLP.

This Homo sapiens (Human) protein is Tetratricopeptide repeat protein 13 (TTC13).